We begin with the raw amino-acid sequence, 270 residues long: Nuclease P1 (270 aa).

A divalent metal cation is bound by residues Trp1, His6, His15, Asp45, and His60. Position 1-6 (1-6 (WGALGH)) interacts with substrate. Substrate contacts are provided by residues 45 to 51 (DEYRLTS), 60 to 63 (HFID), and 73 to 78 (NVDYER). Cystine bridges form between Cys72–Cys217 and Cys80–Cys85. N-linked (GlcNAc...) asparagine glycosylation occurs at Asn92. A divalent metal cation-binding residues include His116, Asp120, and His126. Positions 116 to 164 (HFIGDMTQPLHDEAYAVGGNKINVTFDGYHDNLHSDWDTYMPQKLIGGH) are substrate binding. Asn138 carries N-linked (GlcNAc...) asparagine glycosylation. A divalent metal cation contacts are provided by His149 and Asp153. Residues Asn184 and Asn197 are each glycosylated (N-linked (GlcNAc...) asparagine).

It belongs to the nuclease type I family. It depends on Zn(2+) as a cofactor.

It localises to the secreted. The enzyme catalyses Endonucleolytic cleavage to 5'-phosphomononucleotide and 5'-phosphooligonucleotide end-products.. Hydrolyzes only single-stranded DNA and RNA without apparent specificity for bases. The sequence is that of Nuclease P1 from Penicillium citrinum.